We begin with the raw amino-acid sequence, 860 residues long: GPI ethanolamine phosphate transferase 2 (860 aa).

Residues Asn-123 and Asn-180 are each glycosylated (N-linked (GlcNAc...) asparagine). 8 helical membrane passes run 408–428 (LGGI…FSAL), 438–458 (LYLI…TVEE), 459–479 (EHQI…ISGS), 487–506 (FNWM…NQTG), 524–544 (NHPV…NKVW), 555–575 (LAFL…ITQA), 576–596 (WEAG…PGTL), and 639–659 (AFLT…LFMV). N-linked (GlcNAc...) asparagine glycosylation occurs at Asn-672. 4 helical membrane passes run 692 to 712 (LVLV…FSMG), 736 to 756 (FVGV…STAG), 795 to 815 (VYVV…TCFF), and 834 to 854 (FVWT…IFVV).

Belongs to the PIGG/PIGN/PIGO family. PIGG subfamily.

The protein resides in the endoplasmic reticulum membrane. Its pathway is glycolipid biosynthesis; glycosylphosphatidylinositol-anchor biosynthesis. Ethanolamine phosphate transferase involved in glycosylphosphatidylinositol-anchor biosynthesis. Transfers ethanolamine phosphate to the GPI second mannose. This chain is GPI ethanolamine phosphate transferase 2 (LAS21), found in Yarrowia lipolytica (strain CLIB 122 / E 150) (Yeast).